Here is a 390-residue protein sequence, read N- to C-terminus: Flap endonuclease 1-1 (390 aa).

The segment at 1–108 (MGIHQLMQFL…GELARRKKLK (108 aa)) is N-domain. Residue Asp34 participates in Mg(2+) binding. A DNA-binding site is contributed by Arg74. Residues Asp90, Glu162, Glu164, Asp183, and Asp185 each coordinate Mg(2+). The segment at 126–254 (QALLQHQRTT…GTAYKLIKEF (129 aa)) is I-domain. Glu162 is a binding site for DNA. Gly232 and Asp234 together coordinate DNA. Asp234 lines the Mg(2+) pocket. The tract at residues 348-356 (FQSRLENFF) is interaction with PCNA. Positions 359–390 (TTKIIHPNNSKAKGKANKKNEQTQKSGGKKKI) are disordered.

Belongs to the XPG/RAD2 endonuclease family. FEN1 subfamily. Interacts with PCNA. Three molecules of FEN1 bind to one PCNA trimer with each molecule binding to one PCNA monomer. PCNA stimulates the nuclease activity without altering cleavage specificity. Mg(2+) serves as cofactor. In terms of processing, phosphorylated. Phosphorylation upon DNA damage induces relocalization to the nuclear plasma.

It is found in the nucleus. It localises to the nucleolus. The protein resides in the nucleoplasm. Its subcellular location is the mitochondrion. In terms of biological role, structure-specific nuclease with 5'-flap endonuclease and 5'-3' exonuclease activities involved in DNA replication and repair. During DNA replication, cleaves the 5'-overhanging flap structure that is generated by displacement synthesis when DNA polymerase encounters the 5'-end of a downstream Okazaki fragment. It enters the flap from the 5'-end and then tracks to cleave the flap base, leaving a nick for ligation. Also involved in the long patch base excision repair (LP-BER) pathway, by cleaving within the apurinic/apyrimidinic (AP) site-terminated flap. Acts as a genome stabilization factor that prevents flaps from equilibrating into structures that lead to duplications and deletions. Also possesses 5'-3' exonuclease activity on nicked or gapped double-stranded DNA, and exhibits RNase H activity. Also involved in replication and repair of rDNA and in repairing mitochondrial DNA. The protein is Flap endonuclease 1-1 of Paramecium tetraurelia.